A 477-amino-acid polypeptide reads, in one-letter code: S-triazine hydrolase (477 aa).

Low complexity-rich tracts occupy residues 38–73 and 120–132; these read SPTTSTSAAPKSSTPPGWQCSPASSTPTPTSHKSSS and PLSSTTRTSDPTT. Disordered regions lie at residues 38 to 77 and 120 to 143; these read SPTTSTSAAPKSSTPPGWQCSPASSTPTPTSHKSSSGVVH and PLSSTTRTSDPTTSPAPGPPGSPF.

This sequence belongs to the metallo-dependent hydrolases superfamily. ATZ/TRZ family.

Its pathway is xenobiotic degradation; melamine degradation. Its function is as follows. Hydrolytic deamination of the S-triazine substrate melamine. This chain is S-triazine hydrolase (trzA), found in Gordonia rubripertincta (Rhodococcus corallinus).